A 238-amino-acid polypeptide reads, in one-letter code: Neuromodulin (238 aa).

The tract at residues 1 to 238 (MLCCMRRTKQ…EEPEADQEHA (238 aa)) is disordered. 2 S-palmitoyl cysteine lipidation sites follow: C3 and C4. Basic and acidic residues predominate over residues 9–32 (KQVEKNDDDQKIEQDGIKPEDKAH). Positions 31 to 60 (AHKAATKIQASFRGHITRKKLKGEKKDDVQ) constitute an IQ domain. A Phosphoserine; by PHK and PKC modification is found at S41. The segment covering 54–83 (EKKDDVQAAEAEANKKDEAPVADGVEKKGE) has biased composition (basic and acidic residues). Residues 84–95 (GTTTAEAAPATG) show a composition bias toward low complexity. The segment covering 97-116 (KPDEPGKAGETPSEEKKGEG) has biased composition (basic and acidic residues). Positions 119 to 130 (ATEQAAPQAPAS) are enriched in low complexity. Polar residues predominate over residues 139–154 (ETESATKASTDNSPSS). 3 positions are modified to phosphoserine: S151, S153, and S154. A compositionally biased stretch (basic and acidic residues) spans 155-167 (KAEDAPAKEEPKQ). Positions 168 to 199 (ADVPAAVTAAAATTPAAEDAAAKATAQPPTET) are enriched in low complexity. T181 carries the post-translational modification Phosphothreonine. 2 positions are modified to phosphoserine; by CK2: S202 and S203. Residues 213 to 225 (DETKPKESARQDE) are compositionally biased toward basic and acidic residues. Over residues 226–238 (GKEEEPEADQEHA) the composition is skewed to acidic residues.

This sequence belongs to the neuromodulin family. As to quaternary structure, identified in a complex containing FGFR4, NCAM1, CDH2, PLCG1, FRS2, SRC, SHC1, GAP43 and CTTN. Interacts (via IQ domain) with calmodulin. Binds calmodulin with a greater affinity in the absence of Ca(2+) than in its presence. Post-translationally, phosphorylated. Phosphorylation of this protein by a protein kinase C is specifically correlated with certain forms of synaptic plasticity. In terms of processing, palmitoylated by ZDHHC3. Palmitoylation is regulated by ARF6 and is essential for plasma membrane association and axonal and dendritic filopodia induction. Deacylated by LYPLA2.

Its subcellular location is the cell membrane. It localises to the cell projection. It is found in the growth cone membrane. The protein localises to the synapse. The protein resides in the filopodium membrane. Its subcellular location is the perikaryon. It localises to the dendrite. It is found in the axon. The protein localises to the cytoplasm. Its function is as follows. This protein is associated with nerve growth. It is a major component of the motile 'growth cones' that form the tips of elongating axons. Plays a role in axonal and dendritic filopodia induction. The sequence is that of Neuromodulin (GAP43) from Homo sapiens (Human).